A 345-amino-acid polypeptide reads, in one-letter code: HTH-type transcriptional regulator reg1 (345 aa).

Residues 1–58 (MTTRLADIAAQAGVSEATVSRVLNGKPGVAATTRQSVLAALDVLGYERPVRLRRRSAG) enclose the HTH lacI-type domain. The H-T-H motif DNA-binding region spans 5 to 24 (LADIAAQAGVSEATVSRVLN).

Functionally, transcription repressor involved in control of expression of alpha-amylase and chitinase genes and of actinorhodin production. This Streptomyces lividans protein is HTH-type transcriptional regulator reg1 (reg1).